The chain runs to 321 residues: Glutaminase (321 aa).

Substrate-binding residues include Ser69, Asn120, Glu165, Asn172, Tyr196, Tyr248, and Val266.

The protein belongs to the glutaminase family. As to quaternary structure, homotetramer.

The catalysed reaction is L-glutamine + H2O = L-glutamate + NH4(+). This is Glutaminase from Bacteroides thetaiotaomicron (strain ATCC 29148 / DSM 2079 / JCM 5827 / CCUG 10774 / NCTC 10582 / VPI-5482 / E50).